The chain runs to 486 residues: MAGQPDRRINLAVARVIPVVLFGIIIYSCYVITKPLCIDYLIDPLPKYNRPSRVGAGAAILVVFYILLLFVIITYVRLLYTVVYNPDLLPRSQAADQQSTPAKRSKSRSRRKGHGHGHRKSKSDEVSDKPVSDVERALDYNAGPMVLPWDTAGLEYFYKKDVFVCQPDGRPIYCSKCCHYKPDRTHHCREVDRCVRKMDHFCPWVGGVVSETSFKFFIQFVFYTALFCMTVLIVCAIYTAELRQDVSLISGSRNMLIISRLVMLTLIGLSDSLQLAAFNLTTIENLNRRSAVWTLAIRVPNHMISRIQPGTRWAPTFRTITYPLPPVPPPLSGMPTQPATGEGDNPYSPPPVPSTDPSAEQHIFAILQTLPGENPFALGSPLKNLQQVLGHSIIDWLLPIKRSPCADHSSAESEFVMGPVVSRLKKEAGLESKDAAAGSITTKHKNSSYNSSPSAPADKRSKRKQKRGKHHHHHHHHRHSSTTGTT.

The next 2 helical transmembrane spans lie at 12–32 (AVAR…CYVI) and 54–74 (VGAG…VIIT). The disordered stretch occupies residues 94–130 (AADQQSTPAKRSKSRSRRKGHGHGHRKSKSDEVSDKP). Basic residues predominate over residues 103-121 (KRSKSRSRRKGHGHGHRKS). The DHHC domain maps to 172-222 (IYCSKCCHYKPDRTHHCREVDRCVRKMDHFCPWVGGVVSETSFKFFIQFVF). Transmembrane regions (helical) follow at residues 217 to 237 (FIQF…VCAI) and 261 to 281 (LVML…FNLT). 2 disordered regions span residues 326 to 357 (PVPP…STDP) and 433 to 486 (KDAA…TGTT). A compositionally biased stretch (low complexity) spans 447–456 (SSYNSSPSAP). The segment covering 460–480 (RSKRKQKRGKHHHHHHHHRHS) has biased composition (basic residues).

It belongs to the DHHC palmitoyltransferase family. PFA5 subfamily. Autopalmitoylated.

The protein localises to the membrane. The catalysed reaction is L-cysteinyl-[protein] + hexadecanoyl-CoA = S-hexadecanoyl-L-cysteinyl-[protein] + CoA. This is Palmitoyltransferase pfa5 (pfa5) from Emericella nidulans (strain FGSC A4 / ATCC 38163 / CBS 112.46 / NRRL 194 / M139) (Aspergillus nidulans).